The chain runs to 145 residues: MNNGVNKLSDLLVLTTEYIQASYETEAFDAHREWVCIVGNPVALHSTLVDIRNGKVVVKVTHPGWAQYLLLKKDEIVHALRRRYPSLGVTGMSTYVDSTSRTPSAKKDMQGLSVSEKQTRPVPELAEVFEQLRTLFQVKTEEPSH.

Residues 95–119 form a disordered region; it reads YVDSTSRTPSAKKDMQGLSVSEKQT.

This is an uncharacterized protein from Treponema pallidum (strain Nichols).